A 315-amino-acid polypeptide reads, in one-letter code: B3 domain-containing protein At1g05920 (315 aa).

Residues 24-129 are disordered; it reads MISRDNQKKT…PQVASVPKSV (106 aa). Basic and acidic residues-rich tracts occupy residues 39–51, 66–83, and 100–114; these read VREEKGKRREEMI, KEGKGKRREEMISRDNRT, and FDHVPRGTREPHAYL. A DNA-binding region (TF-B3) is located at residues 204–306; that stretch reads INTVIQNDFL…ILCFALVPPT (103 aa).

The protein resides in the nucleus. This Arabidopsis thaliana (Mouse-ear cress) protein is B3 domain-containing protein At1g05920.